The primary structure comprises 315 residues: MAPQRRGPPRIPEGSSAAERRRATSTKKDRLPREAQRTWLRIVAFGVGLALVTCLLWSSVGIDDDVAEVVARRGEVLEGRFIEVPCSEDYDGHRRFEGCTPRKCGRGVTDIVITREEAEQIRRIAEKGLSLGGSDGGASILDLHSGALSVGKHFVNLYRYFGDKIQNIFSEEDFQLYRDIRQKVQLTIAEAFGISASLLYLTKPTFFSRINSTEARTAHDEYWHAHVDKVTYGSFDYTSLLYLSDYLEDFGGGRFVFMEEGSNKTVEPRAGRVSFFTSGSENLHRVEKVLWGTRYAITIAFTCNPDHGIEDPVLT.

The interval 1–31 (MAPQRRGPPRIPEGSSAAERRRATSTKKDRL) is disordered. Residues 1–41 (MAPQRRGPPRIPEGSSAAERRRATSTKKDRLPREAQRTWLR) are Cytoplasmic-facing. A compositionally biased stretch (basic and acidic residues) spans 18 to 31 (AERRRATSTKKDRL). Residues 42-62 (IVAFGVGLALVTCLLWSSVGI) traverse the membrane as a helical; Signal-anchor for type II membrane protein segment. Residues 63–315 (DDDVAEVVAR…DHGIEDPVLT (253 aa)) are Lumenal-facing. In terms of domain architecture, Fe2OG dioxygenase spans 203 to 305 (KPTFFSRINS…AITIAFTCNP (103 aa)). Asn211 is a glycosylation site (N-linked (GlcNAc...) asparagine). Positions 226 and 228 each coordinate Fe cation. The N-linked (GlcNAc...) asparagine glycan is linked to Asn263. Residue His284 participates in Fe cation binding. Arg294 is an active-site residue. Arg294 provides a ligand contact to 2-oxoglutarate.

It belongs to the OGFOD3 family. Requires Fe(2+) as cofactor. The cofactor is L-ascorbate.

The protein resides in the membrane. The polypeptide is 2-oxoglutarate and iron-dependent oxygenase domain-containing protein 3 (Ogfod3) (Mus musculus (Mouse)).